A 322-amino-acid polypeptide reads, in one-letter code: Cytochrome c biogenesis protein CcsA (322 aa).

6 helical membrane-spanning segments follow: residues 9-29, 44-64, 143-163, 226-246, 259-276, and 289-309; these read ILTH…LITL, GMIV…ASSG, MLLS…ILII, VISL…VWAN, ETWA…LHSR, and IASI…LLGI.

This sequence belongs to the CcmF/CycK/Ccl1/NrfE/CcsA family. May interact with Ccs1.

The protein localises to the plastid. It localises to the chloroplast thylakoid membrane. Required during biogenesis of c-type cytochromes (cytochrome c6 and cytochrome f) at the step of heme attachment. This Triticum aestivum (Wheat) protein is Cytochrome c biogenesis protein CcsA.